The sequence spans 447 residues: ATP-dependent protease ATPase subunit HslU (447 aa).

ATP is bound by residues Ile18, Gly60 to Glu65, Asp259, Glu325, and Arg397.

The protein belongs to the ClpX chaperone family. HslU subfamily. As to quaternary structure, a double ring-shaped homohexamer of HslV is capped on each side by a ring-shaped HslU homohexamer. The assembly of the HslU/HslV complex is dependent on binding of ATP.

The protein resides in the cytoplasm. Its function is as follows. ATPase subunit of a proteasome-like degradation complex; this subunit has chaperone activity. The binding of ATP and its subsequent hydrolysis by HslU are essential for unfolding of protein substrates subsequently hydrolyzed by HslV. HslU recognizes the N-terminal part of its protein substrates and unfolds these before they are guided to HslV for hydrolysis. The sequence is that of ATP-dependent protease ATPase subunit HslU from Burkholderia thailandensis (strain ATCC 700388 / DSM 13276 / CCUG 48851 / CIP 106301 / E264).